We begin with the raw amino-acid sequence, 1046 residues long: UDP-N-acetylglucosamine--peptide N-acetylglucosaminyltransferase 110 kDa subunit (1046 aa).

Alanine 2 carries the N-acetylalanine modification. Phosphoserine; by GSK3-beta; alternate is present on residues serine 3 and serine 4. Serine 3 and serine 4 each carry an O-linked (GlcNAc) serine; alternate glycan. Residue serine 20 is modified to Phosphoserine. TPR repeat units follow at residues 21-54 (FQGLAELAHREYQAGDFEAAERHCMQLWRQEPDN), 89-122 (AEAYSNLGNVYKERGQLQEAIEHYRHALRLKPDF), 123-156 (IDGYINLAAALVAAGDMEGAVQAYVSALQYNPDL), 157-190 (YCVRSDLGNLLKALGRLEEAKACYLKAIETQPNF), 191-224 (AVAWSNLGCVFNAQGEIWLAIHHFEKAVTLDPNF), 225-258 (LDAYINLGNVLKEARIFDRAVAAYLRALSLSPNH), 259-292 (AVVHGNLACVYYEQGLIDLAIDTYRRAIELQPHF), 293-326 (PDAYCNLANALKEKGSVAEAEDCYNTALRLCPTH), 327-360 (ADSLNNLANIKREQGNIEEAVRLYRKALEVFPEF), 361-394 (AAAHSNLASVLQQQGKLQEALMHYKEAIRISPTF), 395-428 (ADAYSNMGNTLKEMQDVQGALQCYTRAIQINPAF), and 429-462 (ADAHSNLASIHKDSGNIPEAIASYRTALKLKPDF). Serine 399 is a glycosylation site (O-linked (GlcNAc) serine; by autocatalysis). At threonine 454 the chain carries Phosphothreonine. The stretch at 463–473 (PDAYCNLAHCL) is one TPR 13; truncated repeat. The DFP motif signature appears at 464-466 (DAY). A Nuclear localization signal motif is present at residues 487–503 (KKLVSIVADQLEKNRLP). Histidine 508 functions as the Proton acceptor in the catalytic mechanism. UDP-binding positions include glutamine 849, lysine 852, 906-908 (APK), 911-914 (HVRR), 930-932 (HTT), and aspartate 935. Position 989 is a phosphotyrosine (tyrosine 989). The required for phosphatidylinositol 3,4,5-triphosphate binding stretch occupies residues 991 to 1010 (KKIRGKVWKQRISSPLFNTK).

It belongs to the glycosyltransferase 41 family. O-GlcNAc transferase subfamily. As to quaternary structure, monomer; may exist in different oligomerization states in cells. Homotrimer, oligomerizes via TPR repeats 6 and 7. Trimerization is not necessary for activity in vitro, however it increases affinity for UDP-GlcNAc. Component of a THAP1/THAP3-HCFC1-OGT complex. Component of the NSL complex at least composed of MOF/KAT8, KANSL1, KANSL2, KANSL3, MCRS1, PHF20, OGT1/OGT, WDR5 and HCFC1. Found in a complex with KIF5B, RHOT1, RHOT2 and TRAK1. Found in a complex composed of at least SINHCAF, SIN3A, HDAC1, SAP30, RBBP4, OGT and TET1. Component of a complex composed of KMT2E/MLL5, OGT and USP7; the complex stabilizes KMT2E/MLL5, preventing KMT2E/MLL5 ubiquitination and proteasomal-mediated degradation. Interacts (via TPRs 1-6) with SIN3A; the interaction mediates transcriptional repression in parallel with histone deacetylase. Interacts (via TPR 5-6) with TET1, TET2 and TET3. Interacts (via TPR repeats 6 and 7) with ATXN10. Interacts with NSD2. Interacts with PROSER1; this interaction mediates TET2 O-GlcNAcylation and stability by promoting the interaction between OGT and TET2. In terms of processing, ubiquitinated by the SCF(FBXO31) complex, leading to its proteasomal degradation. Phosphorylation on Ser-3 or Ser-4 by GSK3-beta positively regulates its activity. Phosphorylation at Thr-454 by AMPK promotes nuclear localization. Post-translationally, glycosylated via autocatalysis; O-GlcNAcylation at Ser-399 promotes nuclear localization.

The protein localises to the nucleus. It localises to the cytoplasm. The catalysed reaction is L-seryl-[protein] + UDP-N-acetyl-alpha-D-glucosamine = 3-O-(N-acetyl-beta-D-glucosaminyl)-L-seryl-[protein] + UDP + H(+). The enzyme catalyses L-threonyl-[protein] + UDP-N-acetyl-alpha-D-glucosamine = 3-O-(N-acetyl-beta-D-glucosaminyl)-L-threonyl-[protein] + UDP + H(+). It participates in protein modification; protein glycosylation. With respect to regulation, inhibited by UDP. Its function is as follows. Catalyzes the transfer of a single N-acetylglucosamine from UDP-GlcNAc to a serine or threonine residue in cytoplasmic and nuclear proteins resulting in their modification with a beta-linked N-acetylglucosamine (O-GlcNAc). Glycosylates a large and diverse number of proteins including histone H2B, AKT1, AMPK, ATG4B, CAPRIN1, EZH2, FNIP1, GSDMD, KRT7, LMNA, LMNB1, LMNB2, RPTOR, HOXA1, PFKL, KMT2E/MLL5, MAPT/TAU, TET2, RBL2, RET, NOD2 and HCFC1. Can regulate their cellular processes via cross-talk between glycosylation and phosphorylation or by affecting proteolytic processing. Involved in insulin resistance in muscle and adipocyte cells via glycosylating insulin signaling components and inhibiting the 'Thr-308' phosphorylation of AKT1, enhancing IRS1 phosphorylation and attenuating insulin signaling. Involved in glycolysis regulation by mediating glycosylation of 6-phosphofructokinase PFKL, inhibiting its activity. Plays a key role in chromatin structure by mediating O-GlcNAcylation of 'Ser-112' of histone H2B: recruited to CpG-rich transcription start sites of active genes via its interaction with TET proteins (TET1, TET2 or TET3). As part of the NSL complex indirectly involved in acetylation of nucleosomal histone H4 on several lysine residues. O-GlcNAcylation of 'Ser-75' of EZH2 increases its stability, and facilitating the formation of H3K27me3 by the PRC2/EED-EZH2 complex. Stabilizes KMT2E/MLL5 by mediating its glycosylation, thereby preventing KMT2E/MLL5 ubiquitination. Regulates circadian oscillation of the clock genes and glucose homeostasis in the liver. Stabilizes clock proteins BMAL1 and CLOCK through O-glycosylation, which prevents their ubiquitination and subsequent degradation. Promotes the CLOCK-BMAL1-mediated transcription of genes in the negative loop of the circadian clock such as PER1/2 and CRY1/2. O-glycosylates HCFC1 and regulates its proteolytic processing and transcriptional activity. Component of a THAP1/THAP3-HCFC1-OGT complex that is required for the regulation of the transcriptional activity of RRM1. Regulates mitochondrial motility in neurons by mediating glycosylation of TRAK1. Promotes autophagy by mediating O-glycosylation of ATG4B. Acts as a regulator of mTORC1 signaling by mediating O-glycosylation of RPTOR and FNIP1: O-GlcNAcylation of RPTOR in response to glucose sufficiency promotes activation of the mTORC1 complex. In terms of biological role, catalyzes the transfer of a single N-acetylglucosamine from UDP-GlcNAc to a serine or threonine residue. Acts on cytoplasmic and nuclear proteins resulting in their modification with a beta-linked N-acetylglucosamine (O-GlcNAc). Glycosylates a large and diverse number of proteins including histone H2B, AKT1, ATG4B, EZH2, PFKL, KMT2E/MLL5, MAPT/TAU, NOD2 and HCFC1. Can regulate their cellular processes via cross-talk between glycosylation and phosphorylation or by affecting proteolytic processing. Probably by glycosylating KMT2E/MLL5, stabilizes KMT2E/MLL5 by preventing its ubiquitination. Involved in insulin resistance in muscle and adipocyte cells via glycosylating insulin signaling components and inhibiting the 'Thr-308' phosphorylation of AKT1, enhancing IRS1 phosphorylation and attenuating insulin signaling. Involved in glycolysis regulation by mediating glycosylation of 6-phosphofructokinase PFKL, inhibiting its activity. Component of a THAP1/THAP3-HCFC1-OGT complex that is required for the regulation of the transcriptional activity of RRM1. Plays a key role in chromatin structure by mediating O-GlcNAcylation of 'Ser-112' of histone H2B: recruited to CpG-rich transcription start sites of active genes via its interaction with TET proteins (TET1, TET2 or TET3). As part of the NSL complex indirectly involved in acetylation of nucleosomal histone H4 on several lysine residues. O-GlcNAcylation of 'Ser-75' of EZH2 increases its stability, and facilitating the formation of H3K27me3 by the PRC2/EED-EZH2 complex. Regulates circadian oscillation of the clock genes and glucose homeostasis in the liver. Stabilizes clock proteins BMAL1 and CLOCK through O-glycosylation, which prevents their ubiquitination and subsequent degradation. Promotes the CLOCK-BMAL1-mediated transcription of genes in the negative loop of the circadian clock such as PER1/2 and CRY1/2. O-glycosylates HCFC1 and regulates its proteolytic processing and transcriptional activity. Regulates mitochondrial motility in neurons by mediating glycosylation of TRAK1. Glycosylates HOXA1. O-glycosylates FNIP1. Promotes autophagy by mediating O-glycosylation of ATG4B. This chain is UDP-N-acetylglucosamine--peptide N-acetylglucosaminyltransferase 110 kDa subunit (OGT), found in Oryctolagus cuniculus (Rabbit).